Consider the following 139-residue polypeptide: Early placenta insulin-like peptide (139 aa).

The N-terminal stretch at 1-25 is a signal peptide; it reads MASLFRSYLPAIWLLLSQLLRESLA. Cystine bridges form between Cys-31-Cys-125, Cys-43-Cys-138, and Cys-124-Cys-129. A propeptide spans 59-114 (c peptide); the sequence is LESGRPKEMVSTSNNKDGQALGTTSEFIPNLSPELKKPLSEGQPSLKKIILSRKKR.

Belongs to the insulin family. In terms of tissue distribution, expressed in placenta, uterus and in fetal perichondrium. Expression levels were increased in both early placentas and molar pregnancies and were reduced in choriocarcinoma cells.

It is found in the secreted. May play an important role in trophoblast development and in the regulation of bone formation. This Homo sapiens (Human) protein is Early placenta insulin-like peptide (INSL4).